We begin with the raw amino-acid sequence, 263 residues long: Endonuclease 8 (263 aa).

The Schiff-base intermediate with DNA role is filled by Pro-2. Catalysis depends on Glu-3, which acts as the Proton donor. Lys-53 (proton donor; for beta-elimination activity) is an active-site residue. Gln-70, Arg-125, and Asn-169 together coordinate DNA. The FPG-type zinc finger occupies 229–263 (KVFHRDGEACERCGGIIEKTTLSSRPFYWCPHCQK). The active-site Proton donor; for delta-elimination activity is Arg-253.

This sequence belongs to the FPG family. Zn(2+) is required as a cofactor.

It catalyses the reaction 2'-deoxyribonucleotide-(2'-deoxyribose 5'-phosphate)-2'-deoxyribonucleotide-DNA = a 3'-end 2'-deoxyribonucleotide-(2,3-dehydro-2,3-deoxyribose 5'-phosphate)-DNA + a 5'-end 5'-phospho-2'-deoxyribonucleoside-DNA + H(+). Functionally, involved in base excision repair of DNA damaged by oxidation or by mutagenic agents. Acts as a DNA glycosylase that recognizes and removes damaged bases. Has a preference for oxidized pyrimidines, such as thymine glycol, 5,6-dihydrouracil and 5,6-dihydrothymine. Has AP (apurinic/apyrimidinic) lyase activity and introduces nicks in the DNA strand. Cleaves the DNA backbone by beta-delta elimination to generate a single-strand break at the site of the removed base with both 3'- and 5'-phosphates. In Salmonella agona (strain SL483), this protein is Endonuclease 8.